The primary structure comprises 99 residues: Gibberellin-regulated protein 3 (99 aa).

The N-terminal stretch at Met-1–Ala-26 is a signal peptide.

It belongs to the GASA family. In terms of processing, six disulfide bonds may be present. Expressed in siliques, dry seeds and vasculature of roots and rosette leaves.

Its subcellular location is the secreted. In terms of biological role, gibberellin-regulated protein that may function in hormonal controlled steps of development such as seed germination, flowering and seed maturation. The sequence is that of Gibberellin-regulated protein 3 (GASA3) from Arabidopsis thaliana (Mouse-ear cress).